Reading from the N-terminus, the 176-residue chain is Translation initiation factor IF-3 (176 aa).

The protein belongs to the IF-3 family. Monomer.

Its subcellular location is the cytoplasm. Its function is as follows. IF-3 binds to the 30S ribosomal subunit and shifts the equilibrium between 70S ribosomes and their 50S and 30S subunits in favor of the free subunits, thus enhancing the availability of 30S subunits on which protein synthesis initiation begins. This chain is Translation initiation factor IF-3, found in Streptococcus equi subsp. zooepidemicus (strain H70).